Here is a 218-residue protein sequence, read N- to C-terminus: Small ribosomal subunit protein uS3c (218 aa).

The KH type-2 domain maps to 47–118 (VQKNIRISSG…KLNIAITRIS (72 aa)).

Belongs to the universal ribosomal protein uS3 family. As to quaternary structure, part of the 30S ribosomal subunit.

It is found in the plastid. The protein resides in the chloroplast. The polypeptide is Small ribosomal subunit protein uS3c (rps3) (Lepidium virginicum (Virginia pepperweed)).